We begin with the raw amino-acid sequence, 377 residues long: Succinyl-diaminopimelate desuccinylase (377 aa).

H68 serves as a coordination point for Zn(2+). Residue D70 is part of the active site. D101 is a Zn(2+) binding site. Residue E135 is the Proton acceptor of the active site. The Zn(2+) site is built by E136, E164, and H350.

This sequence belongs to the peptidase M20A family. DapE subfamily. As to quaternary structure, homodimer. The cofactor is Zn(2+).

It catalyses the reaction N-succinyl-(2S,6S)-2,6-diaminopimelate + H2O = (2S,6S)-2,6-diaminopimelate + succinate. It participates in amino-acid biosynthesis; L-lysine biosynthesis via DAP pathway; LL-2,6-diaminopimelate from (S)-tetrahydrodipicolinate (succinylase route): step 3/3. Functionally, catalyzes the hydrolysis of N-succinyl-L,L-diaminopimelic acid (SDAP), forming succinate and LL-2,6-diaminopimelate (DAP), an intermediate involved in the bacterial biosynthesis of lysine and meso-diaminopimelic acid, an essential component of bacterial cell walls. This is Succinyl-diaminopimelate desuccinylase (dapE) from Vibrio cholerae serotype O1 (strain ATCC 39315 / El Tor Inaba N16961).